A 461-amino-acid polypeptide reads, in one-letter code: Cysteine--tRNA ligase (461 aa).

A Zn(2+)-binding site is contributed by Cys-28. Residues 30 to 40 carry the 'HIGH' region motif; the sequence is ITVYDLCHIGH. 3 residues coordinate Zn(2+): Cys-209, His-234, and Glu-238. The 'KMSKS' region signature appears at 266–270; that stretch reads KMSKS. Position 269 (Lys-269) interacts with ATP.

This sequence belongs to the class-I aminoacyl-tRNA synthetase family. In terms of assembly, monomer. Zn(2+) serves as cofactor.

The protein resides in the cytoplasm. It catalyses the reaction tRNA(Cys) + L-cysteine + ATP = L-cysteinyl-tRNA(Cys) + AMP + diphosphate. The sequence is that of Cysteine--tRNA ligase from Shigella sonnei (strain Ss046).